The sequence spans 575 residues: Inactive terpenoid synthase 20, chloroplastic (575 aa).

The transit peptide at 1-52 directs the protein to the chloroplast; that stretch reads MEAITKNGSLSQTLVHCGPKSLSSFIPVRCLRFSKNPFPKKLVVTRARTSIN. Residues Asp332, Asp336, Asp474, Thr478, and Glu482 each coordinate Mg(2+). Positions 332–336 match the DDXXD motif motif; it reads DDLYD.

This sequence belongs to the terpene synthase family. Tpsa subfamily. In terms of tissue distribution, predominantly expressed in roots but also in leaves and stems.

It is found in the plastid. The protein resides in the chloroplast. Functionally, does not possess diterpene synthase activity. The sequence is that of Inactive terpenoid synthase 20, chloroplastic from Arabidopsis thaliana (Mouse-ear cress).